The chain runs to 147 residues: Heavy metal-dependent transcription regulator 2 (147 aa).

The HTH merR-type domain occupies 1-69 (MNIGEASKTS…VEQIKELLAL (69 aa)). A DNA-binding region (H-T-H motif) is located at residues 3-22 (IGEASKTSGVSSKMIRYYEQ).

Its subcellular location is the cytoplasm. Transcriptional regulator involved in acid tolerance. Binds copper. This chain is Heavy metal-dependent transcription regulator 2 (hmrR2), found in Rhizobium meliloti (strain 1021) (Ensifer meliloti).